The following is a 140-amino-acid chain: MRRTILKSKIHRITITGADLHYEGSLTLDEAIMEAANLVPFEKIEIYNVNNGHRFSTYVIPGQRYGGECILNGAAARLGHAGDIIIIVSWADLDEEELKNFKVNLVYMDEENNIKEHKVTTVFSEEVKEIAERNKNLVRD.

Residue serine 25 is the Schiff-base intermediate with substrate; via pyruvic acid of the active site. Residue serine 25 is modified to Pyruvic acid (Ser). Threonine 57 provides a ligand contact to substrate. Tyrosine 58 acts as the Proton donor in catalysis. 73–75 (GAA) is a substrate binding site.

This sequence belongs to the PanD family. Heterooctamer of four alpha and four beta subunits. Pyruvate is required as a cofactor. Post-translationally, is synthesized initially as an inactive proenzyme, which is activated by self-cleavage at a specific serine bond to produce a beta-subunit with a hydroxyl group at its C-terminus and an alpha-subunit with a pyruvoyl group at its N-terminus.

It localises to the cytoplasm. The enzyme catalyses L-aspartate + H(+) = beta-alanine + CO2. Its pathway is cofactor biosynthesis; (R)-pantothenate biosynthesis; beta-alanine from L-aspartate: step 1/1. Catalyzes the pyruvoyl-dependent decarboxylation of aspartate to produce beta-alanine. This chain is Aspartate 1-decarboxylase, found in Persephonella marina (strain DSM 14350 / EX-H1).